Here is a 358-residue protein sequence, read N- to C-terminus: GDSL esterase/lipase At2g30220 (358 aa).

An N-terminal signal peptide occupies residues 1–22 (MYISKTIVFGLFVATLLVSCNA). An N-linked (GlcNAc...) asparagine glycan is attached at asparagine 25. Serine 40 functions as the Nucleophile in the catalytic mechanism. Residues asparagine 102 and asparagine 324 are each glycosylated (N-linked (GlcNAc...) asparagine). Catalysis depends on residues aspartate 332 and histidine 335.

It belongs to the 'GDSL' lipolytic enzyme family.

The protein resides in the secreted. This Arabidopsis thaliana (Mouse-ear cress) protein is GDSL esterase/lipase At2g30220.